Reading from the N-terminus, the 254-residue chain is MPQQIELRNITLQAAQPLVHGVSLTLQRGRVLALVGGSGSGKSLTCAATLGILPAGVRQTAGEILADGKPVSPYALRGIKIATIMQNPRSAFNPLHTMHTHARETCLALGKPADDATLTAAIEAVGLENAARVLKLYPFEMSGGMLQRMMIAMAVLCESPFIIADEPTTDLDVVAQARILDLLESIMQKQAPGMLLVTHDMGVVARLADDVAVMSQGKIVEQGDVETLFNAPKHTVTRSLVSAHLALYGMELAS.

In terms of domain architecture, ABC transporter spans 2–241 (PQQIELRNIT…PKHTVTRSLV (240 aa)). 36 to 43 (GGSGSGKS) contributes to the ATP binding site.

The protein belongs to the ABC transporter superfamily. Nickel importer (TC 3.A.1.5.3) family. As to quaternary structure, the complex is composed of two ATP-binding proteins (NikD and NikE), two transmembrane proteins (NikB and NikC) and a solute-binding protein (NikA).

It localises to the cell inner membrane. The catalysed reaction is Ni(2+)(out) + ATP + H2O = Ni(2+)(in) + ADP + phosphate + H(+). Its function is as follows. Part of the ABC transporter complex NikABCDE involved in nickel import. Responsible for energy coupling to the transport system. The polypeptide is Nickel import ATP-binding protein NikD (Shigella flexneri).